The primary structure comprises 450 residues: MSEVTITGFRSRDVRFPTSLDKTGSDAMNAAGDYSAAYCILETDSAHSGHGMTFTIGRGNDIVCAAINHVADRLKGKKLSSLVADWGKTWRYLVNDSQLRWIGPEKGVIHLALGAVVNAVWDLWAKTLNKPVWRIVADMTPEEYVRCIDFRYITDAITPEEAVAMLREQEAGKAKRIEEALQNRAVPAYTTSAGWLGYGEDKMKQLLRETLAAGYRHFKVKVGGSVEEDRRRLGIAREILGFDKGNVLMVDANQVWSVPEAIDYMKQLSEYKPWFIEEPTSPDDIMGHKAIRDALKPYGIGVATGEMCQNRVMFKQLIMTGAIDICQIDACRLGGVNEVLAVLLMAKKYGVPIVPHSGGVGLPEYTQHLSTIDYVVVSGKLSVLEFVDHLHEHFLHPSVIKDGYYQTPTEAGYSVEMKPESMDKYEYPGKKGVSWWTTDEALPILNGEKI.

Lys-221 is an active-site residue. Mg(2+) is bound by residues Asp-251, Glu-277, and Glu-306. His-356 is an active-site residue.

The protein belongs to the mandelate racemase/muconate lactonizing enzyme family. Mg(2+) is required as a cofactor.

It carries out the reaction L-galactonate = 2-dehydro-3-deoxy-L-galactonate + H2O. It participates in carbohydrate acid metabolism. In terms of biological role, mediates the conversion of L-galactonate to 2-dehydro-3-deoxy-L-galactonate, the second step in D-galacturonate catabolic process. The protein is L-galactonate dehydratase (lgd1) of Hypocrea jecorina (Trichoderma reesei).